The following is a 155-amino-acid chain: Ribonuclease HI (155 aa).

The RNase H type-1 domain occupies 1–142 (MTKQVEIFTD…CDELARAAAE (142 aa)). 4 residues coordinate Mg(2+): aspartate 10, glutamate 48, aspartate 70, and aspartate 134.

The protein belongs to the RNase H family. In terms of assembly, monomer. Mg(2+) is required as a cofactor.

Its subcellular location is the cytoplasm. The catalysed reaction is Endonucleolytic cleavage to 5'-phosphomonoester.. Endonuclease that specifically degrades the RNA of RNA-DNA hybrids. This is Ribonuclease HI from Vibrio vulnificus (strain CMCP6).